Reading from the N-terminus, the 734-residue chain is Photosystem I P700 chlorophyll a apoprotein A2 (734 aa).

8 consecutive transmembrane segments (helical) span residues 46–69 (IFAS…FHVA), 135–158 (LYTG…LHLQ), 175–199 (LNHH…HVAI), 273–291 (MAHH…GHMY), 330–353 (IHFQ…QHMY), 369–395 (AALY…IFFI), 417–439 (AIIS…LYVH), and 517–535 (FLVH…LILV). [4Fe-4S] cluster-binding residues include Cys559 and Cys568. The next 2 helical transmembrane spans lie at 575-596 (AFYL…YWHW) and 643-665 (LSVW…MFLI). Positions 654, 662, and 670 each coordinate chlorophyll a. Trp671 contributes to the phylloquinone binding site. The chain crosses the membrane as a helical span at residues 707–727 (LVGLAHFSVGYIFTYAAFLIA).

It belongs to the PsaA/PsaB family. As to quaternary structure, the PsaA/B heterodimer binds the P700 chlorophyll special pair and subsequent electron acceptors. PSI consists of a core antenna complex that captures photons, and an electron transfer chain that converts photonic excitation into a charge separation. The eukaryotic PSI reaction center is composed of at least 11 subunits. The cofactor is P700 is a chlorophyll a/chlorophyll a' dimer, A0 is one or more chlorophyll a, A1 is one or both phylloquinones and FX is a shared 4Fe-4S iron-sulfur center..

It is found in the plastid. Its subcellular location is the chloroplast thylakoid membrane. The enzyme catalyses reduced [plastocyanin] + hnu + oxidized [2Fe-2S]-[ferredoxin] = oxidized [plastocyanin] + reduced [2Fe-2S]-[ferredoxin]. In terms of biological role, psaA and PsaB bind P700, the primary electron donor of photosystem I (PSI), as well as the electron acceptors A0, A1 and FX. PSI is a plastocyanin-ferredoxin oxidoreductase, converting photonic excitation into a charge separation, which transfers an electron from the donor P700 chlorophyll pair to the spectroscopically characterized acceptors A0, A1, FX, FA and FB in turn. Oxidized P700 is reduced on the lumenal side of the thylakoid membrane by plastocyanin. This Arabis hirsuta (Hairy rock-cress) protein is Photosystem I P700 chlorophyll a apoprotein A2.